Here is a 1270-residue protein sequence, read N- to C-terminus: ATP-dependent helicase/nuclease subunit A (1270 aa).

Residues 3–476 (TKWTEEQELA…IMLYKNFRSR (474 aa)) enclose the UvrD-like helicase ATP-binding domain. 24–31 (AAAGSGKT) is an ATP binding site. Positions 528-823 (IENLKVAGDI…RIMSIHKSKG (296 aa)) constitute a UvrD-like helicase C-terminal domain.

Belongs to the helicase family. AddA subfamily. As to quaternary structure, heterodimer of AddA and AddB/RexB. The cofactor is Mg(2+).

The enzyme catalyses Couples ATP hydrolysis with the unwinding of duplex DNA by translocating in the 3'-5' direction.. The catalysed reaction is ATP + H2O = ADP + phosphate + H(+). In terms of biological role, the heterodimer acts as both an ATP-dependent DNA helicase and an ATP-dependent, dual-direction single-stranded exonuclease. Recognizes the chi site generating a DNA molecule suitable for the initiation of homologous recombination. The AddA nuclease domain is required for chi fragment generation; this subunit has the helicase and 3' -&gt; 5' nuclease activities. The chain is ATP-dependent helicase/nuclease subunit A from Clostridium perfringens (strain SM101 / Type A).